Here is a 181-residue protein sequence, read N- to C-terminus: Adenine phosphoribosyltransferase (181 aa).

This sequence belongs to the purine/pyrimidine phosphoribosyltransferase family. As to quaternary structure, homodimer.

The protein localises to the cytoplasm. The catalysed reaction is AMP + diphosphate = 5-phospho-alpha-D-ribose 1-diphosphate + adenine. It participates in purine metabolism; AMP biosynthesis via salvage pathway; AMP from adenine: step 1/1. Functionally, catalyzes a salvage reaction resulting in the formation of AMP, that is energically less costly than de novo synthesis. In Rhodopseudomonas palustris (strain BisB5), this protein is Adenine phosphoribosyltransferase.